Consider the following 359-residue polypeptide: Nicotinate N-methyltransferase 1 (359 aa).

Aspartate 226 provides a ligand contact to S-adenosyl-L-methionine.

Belongs to the class I-like SAM-binding methyltransferase superfamily. Cation-independent O-methyltransferase family. As to expression, highly expressed in anthers, pistils, developing siliques, and developing seeds.

Its subcellular location is the cytoplasm. It localises to the cytosol. It carries out the reaction nicotinate + S-adenosyl-L-methionine = N-methylnicotinate + S-adenosyl-L-homocysteine. Involved in nicotinate detoxification in planta. Catalyzes the conversion of nicotinate to N-methylnicotinate, which is a detoxified form of endogenous nicotinate in planta. The polypeptide is Nicotinate N-methyltransferase 1 (Arabidopsis thaliana (Mouse-ear cress)).